We begin with the raw amino-acid sequence, 579 residues long: Cytochrome P450 monooxygenase prx9 (579 aa).

A helical membrane pass occupies residues 6-25; sequence LPLGSFVGTTLLLFILYKLV. N-linked (GlcNAc...) asparagine glycosylation is found at N194, N292, and N390. Position 512 (C512) interacts with heme.

It belongs to the cytochrome P450 family. Heme is required as a cofactor.

The protein resides in the membrane. It functions in the pathway sesquiterpene biosynthesis. Its function is as follows. Cytochrome P450 monooxygenase; part of the gene cluster that mediates the biosynthesis of PR-toxin, a bicyclic sesquiterpene belonging to the eremophilane class and acting as a mycotoxin. The first step of the pathway is catalyzed by the aristolochene synthase which performs the cyclization of trans,trans-farnesyl diphosphate (FPP) to the bicyclic sesquiterpene aristolochene. Following the formation of aristolochene, the non-oxygenated aristolochene is converted to the trioxygenated intermediate eremofortin B, via 7-epi-neopetasone. This conversion appears to involve three enzymes, a hydroxysterol oxidase-like enzyme, the quinone-oxidase prx3 that forms the quinone-type-structure in the bicyclic nucleus of aristolochene with the C8-oxo group and the C-3 hydroxyl group, and the P450 monooxygenase prx9 that introduces the epoxide at the double bond between carbons 1 and 2. No monoxy or dioxy-intermediates have been reported to be released to the broth, so these three early oxidative reactions may be coupled together. Eremofortin B is further oxidized by another P450 monooxygenase, that introduces a second epoxide between carbons 7 and 11 prior to acetylation to eremofortin A by the acetyltransferase prx11. The second epoxidation may be performed by a second P450 monooxygenase. After the acetylation step, eremofortin A is converted to eremofortin C and then to PR-toxin. First the conversion of eremofortin A to eremofortin C proceeds by oxidation of the side chain of the molecule at C-12 and is catalyzed by the short-chain oxidoreductase prx1. The cytochrome P450 monooxygenase prx8 also plays a role in this step. The primary alcohol formed at C-12 is finally oxidized by the short-chain alcohol dehydrogenase prx4 that forms PR-toxin. The chain is Cytochrome P450 monooxygenase prx9 from Penicillium rubens (strain ATCC 28089 / DSM 1075 / NRRL 1951 / Wisconsin 54-1255) (Penicillium chrysogenum).